Reading from the N-terminus, the 262-residue chain is GTP cyclohydrolase 1 type 2 homolog (262 aa).

Residues His65, Asp102, His222, and Glu225 each coordinate a divalent metal cation.

Belongs to the GTP cyclohydrolase I type 2/NIF3 family. Homohexamer.

This is GTP cyclohydrolase 1 type 2 homolog from Streptococcus pyogenes serotype M3 (strain ATCC BAA-595 / MGAS315).